Reading from the N-terminus, the 752-residue chain is MAP/microtubule affinity-regulating kinase 4 (752 aa).

Residues 1 to 36 (MSSRTVLAPGNDRNSDTHGTLGSGRSSDKGPSWSSR) form a disordered region. Residues 59–310 (YRLLRTIGKG…LEQIMKDKWI (252 aa)) enclose the Protein kinase domain. Residues 65–73 (IGKGNFAKV) and K88 contribute to the ATP site. D181 acts as the Proton acceptor in catalysis. T214 bears the Phosphothreonine; by LKB1 mark. One can recognise a UBA domain in the interval 324–368 (EPEEDFGDTKRIEVMVGMGYTREEIKESLTSQKYNEVTATYLLLG). Residues 385 to 614 (ARVRAPSDTT…PAGRPRPTTN (230 aa)) form a disordered region. Positions 391–406 (SDTTNGTSSSKGTSHS) are enriched in low complexity. Phosphoserine occurs at positions 423 and 543. Residues 544-553 (PSSHSLAPPS) show a composition bias toward low complexity. The region spanning 703–752 (AGGPEPLSHFEVEVCQLPRPGLRGVLFRRVAGTALAFRTLVTRISNDLEL) is the KA1 domain.

The protein belongs to the protein kinase superfamily. CAMK Ser/Thr protein kinase family. SNF1 subfamily. As to quaternary structure, interacts with MAPT/TAU. Interacts with gamma-tubulin. Interacts with ODF2. Interacts with USP9X. Interacts with YWHAQ. Interacts with NLRP3; promoting NLRP3 recruitment to microtubule organizing center (MTOC). Mg(2+) is required as a cofactor. Ubiquitinated with 'Lys-29'- and 'Lys-33'-linked polyubiquitins which appear to impede LKB1-mediated phosphorylation. Deubiquitinated by USP9X. In terms of processing, phosphorylated at Thr-214 by STK11/LKB1 in complex with STE20-related adapter-alpha (STRADA) pseudo kinase and CAB39. Phosphorylated throughout the cell cycle. As to expression, ubiquitous. Isoform 2 is brain-specific. Expressed at highest levels in brain and testis. Also expressed in heart, lung, liver, muscle, kidney and spleen.

The protein localises to the cytoplasm. It is found in the cytoskeleton. The protein resides in the microtubule organizing center. Its subcellular location is the centrosome. It localises to the cilium basal body. The protein localises to the cilium axoneme. It is found in the cell projection. The protein resides in the dendrite. The catalysed reaction is L-seryl-[protein] + ATP = O-phospho-L-seryl-[protein] + ADP + H(+). It catalyses the reaction L-threonyl-[protein] + ATP = O-phospho-L-threonyl-[protein] + ADP + H(+). Activated by phosphorylation on Thr-214. Functionally, serine/threonine-protein kinase. Phosphorylates the microtubule-associated protein MAPT/TAU. Also phosphorylates the microtubule-associated proteins MAP2 and MAP4. Involved in regulation of the microtubule network, causing reorganization of microtubules into bundles. Required for the initiation of axoneme extension during cilium assembly. Regulates the centrosomal location of ODF2 and phosphorylates ODF2 in vitro. Plays a role in cell cycle progression, specifically in the G1/S checkpoint. Reduces neuronal cell survival. Plays a role in energy homeostasis by regulating satiety and metabolic rate. Promotes adipogenesis by activating JNK1 and inhibiting the p38MAPK pathway, and triggers apoptosis by activating the JNK1 pathway. Phosphorylates mTORC1 complex member RPTOR and acts as a negative regulator of the mTORC1 complex, probably due to disruption of the interaction between phosphorylated RPTOR and the RRAGA/RRAGC heterodimer which is required for mTORC1 activation. Involved in NLRP3 positioning along microtubules by mediating NLRP3 recruitment to microtubule organizing center (MTOC) upon inflammasome activation. This chain is MAP/microtubule affinity-regulating kinase 4, found in Homo sapiens (Human).